The chain runs to 74 residues: Protein SspS (74 aa).

This sequence belongs to the alpha/beta-type SASP family.

The chain is Protein SspS (sspS) from Streptococcus pyogenes.